A 314-amino-acid polypeptide reads, in one-letter code: MANILTIFLLISTLVTGIFWSFYCIKSFKNYLINKKIINNNNFHQEKIEKSKNKTYFLKSLASFFPIFLAIFIIRSFIYEPFQIPSGSMMPTLLVGDFILVEKFSYGIKEPITHKILIRTKKPNRGDIAVFQHPTDHNINYIKRIIGLPGDKIRYDLHDKHIHICTNYSDQRGCEKKISINYSQSRSSNFIQKIYFSNKNNIKEDKNIYNSLYFDIVEEIIEDVKHSILLLNSIKNTKENYFQQKNMPKLTWIVPKGEYFMMGDNRDNSLDSRYWGFVPEKNLVGKAIKIWMSFDKNENEWPTGIRINRIGSIH.

A helical membrane pass occupies residues 5-25; sequence LTIFLLISTLVTGIFWSFYCI. The Cytoplasmic segment spans residues 26–63; sequence KSFKNYLINKKIINNNNFHQEKIEKSKNKTYFLKSLAS. A helical membrane pass occupies residues 64–84; the sequence is FFPIFLAIFIIRSFIYEPFQI. Residues 85–314 are Extracellular-facing; it reads PSGSMMPTLL…IRINRIGSIH (230 aa). Catalysis depends on residues Ser-88 and Lys-143.

Belongs to the peptidase S26 family.

The protein localises to the cell membrane. The catalysed reaction is Cleavage of hydrophobic, N-terminal signal or leader sequences from secreted and periplasmic proteins.. In Buchnera aphidicola subsp. Acyrthosiphon pisum (strain APS) (Acyrthosiphon pisum symbiotic bacterium), this protein is Signal peptidase I (lepB).